The following is a 400-amino-acid chain: Putative zinc-binding protein ORF78 (400 aa).

The segment at 9-33 is disordered; sequence LPRKRRAVAQPRTRQPPPKVHREDT.

The polypeptide is Putative zinc-binding protein ORF78 (ORF78) (Ictalurid herpesvirus 1 (strain Auburn) (IcHV-1)).